The primary structure comprises 361 residues: Chorismate synthase (361 aa).

2 residues coordinate NADP(+): arginine 48 and arginine 54. Residues 125-127 (RSS), 238-239 (NA), glycine 278, 293-297 (KPTSS), and arginine 319 contribute to the FMN site.

The protein belongs to the chorismate synthase family. Homotetramer. It depends on FMNH2 as a cofactor.

The catalysed reaction is 5-O-(1-carboxyvinyl)-3-phosphoshikimate = chorismate + phosphate. Its pathway is metabolic intermediate biosynthesis; chorismate biosynthesis; chorismate from D-erythrose 4-phosphate and phosphoenolpyruvate: step 7/7. Catalyzes the anti-1,4-elimination of the C-3 phosphate and the C-6 proR hydrogen from 5-enolpyruvylshikimate-3-phosphate (EPSP) to yield chorismate, which is the branch point compound that serves as the starting substrate for the three terminal pathways of aromatic amino acid biosynthesis. This reaction introduces a second double bond into the aromatic ring system. The chain is Chorismate synthase from Shigella boydii serotype 18 (strain CDC 3083-94 / BS512).